A 660-amino-acid chain; its full sequence is Protein translocase subunit SecA 2 (660 aa).

Residues Q113, G131–T135, and D539 each bind ATP.

This sequence belongs to the SecA family. Monomer and homodimer. Part of the essential Sec protein translocation apparatus which comprises SecA, SecYEG and auxiliary proteins SecDF-YajC and YidC.

The protein localises to the cell inner membrane. The protein resides in the cytoplasm. The catalysed reaction is ATP + H2O + cellular proteinSide 1 = ADP + phosphate + cellular proteinSide 2.. In terms of biological role, part of the Sec protein translocase complex. Interacts with the SecYEG preprotein conducting channel. Has a central role in coupling the hydrolysis of ATP to the transfer of proteins into and across the cell membrane, serving both as a receptor for the preprotein-SecB complex and as an ATP-driven molecular motor driving the stepwise translocation of polypeptide chains across the membrane. The chain is Protein translocase subunit SecA 2 from Bordetella avium (strain 197N).